Reading from the N-terminus, the 215-residue chain is UPF0502 protein YceH (215 aa).

N6-acetyllysine is present on K80.

The protein belongs to the UPF0502 family.

This is UPF0502 protein YceH from Shigella boydii serotype 4 (strain Sb227).